The sequence spans 169 residues: UPF0251 protein MM_2090 (169 aa).

This sequence belongs to the UPF0251 family.

This is UPF0251 protein MM_2090 from Methanosarcina mazei (strain ATCC BAA-159 / DSM 3647 / Goe1 / Go1 / JCM 11833 / OCM 88) (Methanosarcina frisia).